The primary structure comprises 281 residues: Putative dehydrogenase/reductase SDR family member 4-like 1 (281 aa).

36-60 (LVTASTDWIGFAVAQRLAQDGAHVV) lines the NADP(+) pocket. Ser172 contacts substrate. Catalysis depends on Tyr185, which acts as the Proton acceptor. Lys189 serves as a coordination point for NADP(+). Residues 279–281 (SRL) carry the Peroxisomal targeting signal motif.

Belongs to the short-chain dehydrogenases/reductases (SDR) family.

In terms of biological role, putative oxidoreductase. This Homo sapiens (Human) protein is Putative dehydrogenase/reductase SDR family member 4-like 1.